Reading from the N-terminus, the 114-residue chain is Mediator of RNA polymerase II transcription subunit 11 (114 aa).

Residues 28-61 are a coiled coil; it reads LELSKEKANASLLDRQLNQFQTSINRVESELSSQ.

It belongs to the Mediator complex subunit 11 family. As to quaternary structure, component of the Mediator complex. In terms of tissue distribution, ubiquitously expressed at early stage of development. After fertilization expressed in head region as well as in lateral line primordium.

The protein localises to the nucleus. Component of the Mediator complex, a coactivator involved in the regulated transcription of nearly all RNA polymerase II-dependent genes. Mediator functions as a bridge to convey information from gene-specific regulatory proteins to the basal RNA polymerase II transcription machinery. Mediator is recruited to promoters by direct interactions with regulatory proteins and serves as a scaffold for the assembly of a functional pre-initiation complex with RNA polymerase II and the general transcription factors. In Danio rerio (Zebrafish), this protein is Mediator of RNA polymerase II transcription subunit 11 (med11).